Reading from the N-terminus, the 327-residue chain is Aspartate--ammonia ligase (327 aa).

Belongs to the class-II aminoacyl-tRNA synthetase family. AsnA subfamily.

Its subcellular location is the cytoplasm. It carries out the reaction L-aspartate + NH4(+) + ATP = L-asparagine + AMP + diphosphate + H(+). It functions in the pathway amino-acid biosynthesis; L-asparagine biosynthesis; L-asparagine from L-aspartate (ammonia route): step 1/1. This is Aspartate--ammonia ligase from Bacillus cereus (strain B4264).